The primary structure comprises 359 residues: Phosphate acyltransferase (359 aa).

The interval 337 to 359 (AAGAAQPAPETEVPGAHPSPHVA) is disordered.

Belongs to the PlsX family. Homodimer. Probably interacts with PlsY.

Its subcellular location is the cytoplasm. The enzyme catalyses a fatty acyl-[ACP] + phosphate = an acyl phosphate + holo-[ACP]. The protein operates within lipid metabolism; phospholipid metabolism. In terms of biological role, catalyzes the reversible formation of acyl-phosphate (acyl-PO(4)) from acyl-[acyl-carrier-protein] (acyl-ACP). This enzyme utilizes acyl-ACP as fatty acyl donor, but not acyl-CoA. The polypeptide is Phosphate acyltransferase (Cupriavidus necator (strain ATCC 17699 / DSM 428 / KCTC 22496 / NCIMB 10442 / H16 / Stanier 337) (Ralstonia eutropha)).